Reading from the N-terminus, the 228-residue chain is Aldehyde dehydrogenase 9 (228 aa).

Residue 76 to 81 (GSTETA) participates in NAD(+) binding. Catalysis depends on residues glutamate 99 and cysteine 132.

The protein belongs to the aldehyde dehydrogenase family.

It catalyses the reaction an aldehyde + NAD(+) + H2O = a carboxylate + NADH + 2 H(+). It functions in the pathway alcohol metabolism; ethanol degradation; acetate from ethanol: step 2/2. The chain is Aldehyde dehydrogenase 9 (ALDH9) from Polyandrocarpa misakiensis (Tunicate).